Consider the following 102-residue polypeptide: Large ribosomal subunit protein bL21 (102 aa).

Belongs to the bacterial ribosomal protein bL21 family. As to quaternary structure, part of the 50S ribosomal subunit. Contacts protein L20.

Functionally, this protein binds to 23S rRNA in the presence of protein L20. This is Large ribosomal subunit protein bL21 from Sulfurimonas denitrificans (strain ATCC 33889 / DSM 1251) (Thiomicrospira denitrificans (strain ATCC 33889 / DSM 1251)).